The sequence spans 311 residues: ATP synthase subunit gamma, mitochondrial (311 aa).

A mitochondrion-targeting transit peptide spans 1–33; that stretch reads MLSRIVSNNATRSVMCHQAQVGILYKTNPVRTY.

It belongs to the ATPase gamma chain family. As to quaternary structure, F-type ATPases have 2 components, CF(1) - the catalytic core - and CF(0) - the membrane proton channel. CF(1) has five subunits: alpha(3), beta(3), gamma(1), delta(1), epsilon(1). CF(0) has three main subunits: a, b and c.

Its subcellular location is the mitochondrion. The protein resides in the mitochondrion inner membrane. In terms of biological role, mitochondrial membrane ATP synthase (F(1)F(0) ATP synthase or Complex V) produces ATP from ADP in the presence of a proton gradient across the membrane which is generated by electron transport complexes of the respiratory chain. F-type ATPases consist of two structural domains, F(1) - containing the extramembraneous catalytic core, and F(0) - containing the membrane proton channel, linked together by a central stalk and a peripheral stalk. During catalysis, ATP synthesis in the catalytic domain of F(1) is coupled via a rotary mechanism of the central stalk subunits to proton translocation. Part of the complex F(1) domain and the central stalk which is part of the complex rotary element. The gamma subunit protrudes into the catalytic domain formed of alpha(3)beta(3). Rotation of the central stalk against the surrounding alpha(3)beta(3) subunits leads to hydrolysis of ATP in three separate catalytic sites on the beta subunits. The chain is ATP synthase subunit gamma, mitochondrial (ATP3) from Saccharomyces cerevisiae (strain ATCC 204508 / S288c) (Baker's yeast).